The chain runs to 621 residues: UvrABC system protein C (621 aa).

The region spanning 13 to 92 (EKPGVYLMKN…IKKYRPRYNI (80 aa)) is the GIY-YIG domain. A UVR domain is found at 204–239 (NEVINDLKIKMEKASSELKFEEAASFRDKLLAVEKI).

Belongs to the UvrC family. Interacts with UvrB in an incision complex.

The protein resides in the cytoplasm. Functionally, the UvrABC repair system catalyzes the recognition and processing of DNA lesions. UvrC both incises the 5' and 3' sides of the lesion. The N-terminal half is responsible for the 3' incision and the C-terminal half is responsible for the 5' incision. In Clostridium novyi (strain NT), this protein is UvrABC system protein C.